Here is a 399-residue protein sequence, read N- to C-terminus: Zinc finger TRAF-type-containing protein 1 (399 aa).

The segment covering 1–13 (MSGAEEAGGGGPA) has biased composition (gly residues). A disordered region spans residues 1–21 (MSGAEEAGGGGPAAGPAGAVP). Residues 106–151 (CTVCLDLPKASVYQCTNGHLMCAGCFIHLLADARLKEEQATCPNCR) form an RING-type; degenerate zinc finger. The segment at 152–210 (CEISKSLCCRNLAVEKAVSELPSECGFCLRQFPRSLLERHQKEECQDRVTQCKYKRIGC) adopts a TRAF-type zinc-finger fold.

This sequence belongs to the ZFTRAF1 family. Interacts with LGALS3. As to expression, expressed in heart, brain, liver, testis and kidney.

The protein localises to the cytoplasm. It localises to the perinuclear region. The chain is Zinc finger TRAF-type-containing protein 1 from Mus musculus (Mouse).